We begin with the raw amino-acid sequence, 357 residues long: uncharacterized protein (357 aa).

Residues 1 to 19 (MKRILSFIFIILFFNSSYA) form the signal peptide.

This is an uncharacterized protein from Rickettsia prowazekii (strain Madrid E).